A 396-amino-acid chain; its full sequence is OTU domain-containing protein 3 (396 aa).

Residues 1–49 (MSRKQAAKSRPGSGGRRAEAERKRDERAARRALAKERRNRPDPGGSGCE) are disordered. Basic and acidic residues predominate over residues 16-41 (RRAEAERKRDERAARRALAKERRNRP). The 125-residue stretch at 64–188 (LKLREVPGDG…GEHYDSVRRI (125 aa)) folds into the OTU domain. Position 65 is an N6-acetyllysine (Lys-65). The interval 69–75 (VPGDGNC) is cys-loop. Asp-72 is a catalytic residue. Cys-75 acts as the Nucleophile in catalysis. 2 positions are modified to N6-acetyllysine: Lys-121 and Lys-128. Positions 126–136 (LSKPGTFAGND) are variable-loop. Residues 176 to 181 (YRYGEH) form a his-loop region. The active site involves His-181. Residue Lys-219 is modified to N6-acetyllysine. The region spanning 229–269 (DDVEDAVHKVGSATGCTDFNLIVQNLEAENYNIKSAITALL) is the UBA-like domain. The tract at residues 275-381 (TGNDAEENHE…RDTGRSEADM (107 aa)) is disordered. Composition is skewed to basic and acidic residues over residues 280-301 (EENH…EAGS), 312-331 (NEGR…ESKA), and 343-379 (QRRE…RSEA). The residue at position 290 (Lys-290) is an N6-acetyllysine.

In terms of processing, glucose and fatty acids stimulate CREBBP-dependent acetylation, promoting its nuclear translocation.

The protein localises to the cytoplasm. Its subcellular location is the nucleus. The catalysed reaction is Thiol-dependent hydrolysis of ester, thioester, amide, peptide and isopeptide bonds formed by the C-terminal Gly of ubiquitin (a 76-residue protein attached to proteins as an intracellular targeting signal).. Its function is as follows. Deubiquitinating enzyme that hydrolyzes 'Lys-6'- and 'Lys-11'-linked polyubiquitin. Also hydrolyzes heterotypic (mixed and branched) and homotypic chains. Important regulator of energy metabolism. Glucose and fatty acids trigger its nuclear translocation by CBP-dependent acetylation. In the nucleus, deubiquitinates and stabilizes the nuclear receptor PPARD regulating the expression of various genes involved in glucose and lipid metabolism and oxidative phosphorylation. Also acts as a negative regulator of the ribosome quality control (RQC) by mediating deubiquitination of 40S ribosomal proteins RPS10/eS10 and RPS20/uS10, thereby antagonizing ZNF598-mediated 40S ubiquitination. The polypeptide is OTU domain-containing protein 3 (Otud3) (Mus musculus (Mouse)).